Reading from the N-terminus, the 363-residue chain is Thioredoxin domain-containing protein C13F5.05, mitochondrial (363 aa).

The N-terminal 24 residues, 1–24 (MLFRIPTLFTLFLACFSLVSGVFG), are a transit peptide targeting the mitochondrion. The 110-residue stretch at 32–141 (NTIELNSKNF…KSLQKFVSDS (110 aa)) folds into the Thioredoxin domain.

The protein localises to the mitochondrion. The sequence is that of Thioredoxin domain-containing protein C13F5.05, mitochondrial from Schizosaccharomyces pombe (strain 972 / ATCC 24843) (Fission yeast).